We begin with the raw amino-acid sequence, 344 residues long: Dihydroorotase (344 aa).

Zn(2+) is bound by residues His13 and His15. Substrate is bound by residues 15 to 17 (HLR) and Asn41. The Zn(2+) site is built by Lys99, His136, and His174. Position 99 is an N6-carboxylysine (Lys99). His136 provides a ligand contact to substrate. Leu219 contributes to the substrate binding site. A Zn(2+)-binding site is contributed by Asp247. Asp247 is an active-site residue. His251 and Ala263 together coordinate substrate.

This sequence belongs to the metallo-dependent hydrolases superfamily. DHOase family. Class II DHOase subfamily. Homodimer. It depends on Zn(2+) as a cofactor.

The enzyme catalyses (S)-dihydroorotate + H2O = N-carbamoyl-L-aspartate + H(+). It participates in pyrimidine metabolism; UMP biosynthesis via de novo pathway; (S)-dihydroorotate from bicarbonate: step 3/3. Its function is as follows. Catalyzes the reversible cyclization of carbamoyl aspartate to dihydroorotate. In Acinetobacter baumannii (strain SDF), this protein is Dihydroorotase.